The chain runs to 310 residues: p-hydroxybenzoic acid efflux pump subunit AaeA (310 aa).

Residues 12-32 (AITVVLVILAFIAIFNAWVYY) traverse the membrane as a helical segment.

The protein belongs to the membrane fusion protein (MFP) (TC 8.A.1) family.

It localises to the cell inner membrane. In terms of biological role, forms an efflux pump with AaeB. The chain is p-hydroxybenzoic acid efflux pump subunit AaeA from Escherichia coli O7:K1 (strain IAI39 / ExPEC).